Consider the following 565-residue polypeptide: Periplasmic trehalase (565 aa).

Positions 1 to 30 (MKSPAPSRPQKMALIPACIFLCFAALSVQA) are cleaved as a signal peptide. Substrate is bound by residues arginine 152, 159-160 (WD), asparagine 196, 205-207 (RSQ), 277-279 (RPE), and glycine 310. Catalysis depends on proton donor/acceptor residues aspartate 312 and glutamate 496. Glutamate 511 contacts substrate. The interval 539–565 (CDNVPATRPLSESTTQPVKQKEAEPTP) is disordered.

It belongs to the glycosyl hydrolase 37 family. Monomer.

It localises to the periplasm. The catalysed reaction is alpha,alpha-trehalose + H2O = alpha-D-glucose + beta-D-glucose. Provides the cells with the ability to utilize trehalose at high osmolarity by splitting it into glucose molecules that can subsequently be taken up by the phosphotransferase-mediated uptake system. In Escherichia coli O17:K52:H18 (strain UMN026 / ExPEC), this protein is Periplasmic trehalase.